Reading from the N-terminus, the 277-residue chain is Probable CCR4-associated factor 1 homolog 10 (277 aa).

Positions 40, 42, 166, and 235 each coordinate a divalent metal cation.

It belongs to the CAF1 family. In terms of assembly, component of the CCR4-NOT complex, at least composed of CRR4 and CAF1 proteins. A divalent metal cation serves as cofactor.

It is found in the nucleus. It localises to the cytoplasm. It catalyses the reaction Exonucleolytic cleavage of poly(A) to 5'-AMP.. Ubiquitous transcription factor required for a diverse set of processes. It is a component of the CCR4 complex involved in the control of gene expression. The polypeptide is Probable CCR4-associated factor 1 homolog 10 (CAF1-10) (Arabidopsis thaliana (Mouse-ear cress)).